A 446-amino-acid polypeptide reads, in one-letter code: tRNA-2-methylthio-N(6)-dimethylallyladenosine synthase (446 aa).

Positions 8 to 124 (KTYRVKSFGC…LPGMIDAAVA (117 aa)) constitute an MTTase N-terminal domain. [4Fe-4S] cluster contacts are provided by Cys17, Cys53, Cys87, Cys160, Cys164, and Cys167. The Radical SAM core domain occupies 146 to 378 (RKSAPSAFLT…QAALNRDQAA (233 aa)). The 62-residue stretch at 381-442 (AGSVGRTCEV…PNSLAGQLLE (62 aa)) folds into the TRAM domain.

Belongs to the methylthiotransferase family. MiaB subfamily. In terms of assembly, monomer. It depends on [4Fe-4S] cluster as a cofactor.

It localises to the cytoplasm. The enzyme catalyses N(6)-dimethylallyladenosine(37) in tRNA + (sulfur carrier)-SH + AH2 + 2 S-adenosyl-L-methionine = 2-methylsulfanyl-N(6)-dimethylallyladenosine(37) in tRNA + (sulfur carrier)-H + 5'-deoxyadenosine + L-methionine + A + S-adenosyl-L-homocysteine + 2 H(+). Its function is as follows. Catalyzes the methylthiolation of N6-(dimethylallyl)adenosine (i(6)A), leading to the formation of 2-methylthio-N6-(dimethylallyl)adenosine (ms(2)i(6)A) at position 37 in tRNAs that read codons beginning with uridine. This chain is tRNA-2-methylthio-N(6)-dimethylallyladenosine synthase, found in Erythrobacter litoralis (strain HTCC2594).